The sequence spans 265 residues: Asparagine-rich protein (265 aa).

An N-terminal signal peptide occupies residues 1–21 (MSRLTLLVLLVIAAVIQKVHG). 2 disordered regions span residues 20–71 (HGQG…NRNI) and 88–183 (SNQN…NQQY). Basic and acidic residues-rich tracts occupy residues 22–35 (QGRE…HEPG) and 44–55 (EKTERNLREPNR). Residues 88–98 (SNQNNFGNNRS) are compositionally biased toward low complexity. Basic and acidic residues predominate over residues 115–124 (NKSEVEKENG). A compositionally biased stretch (basic residues) spans 152-166 (KVQHRIAKRFQKRHP).

Nacreous layer of shell (at protein level). Expressed primarily in the mantle with highest level in the mantle pallium and lower level in the mantle edge.

The protein localises to the secreted. The sequence is that of Asparagine-rich protein from Pinctada maxima (Silver-lipped pearl oyster).